The chain runs to 556 residues: MSRGRARLQPPPPGTRTTTLAAVLVLVLLAVVALPLRCDAASAGGEEEEEQQPLDYREALEKSLLYFEAQRSGRLPYSQRVTWRGHSGLTDGLQQGVDLVGGYYDAGDHVKFGLPMAFTVTMLSWGAIDFAADIAAAGEWRHALEAIKWGTDYFVKAHTHPFVYWAEVGDGDTDHYCWQRPEDMTTSRQAYRVDRDNPGSDLAGETAAALAAASIVFRRSDPHYSHLLLHHAQQLFEFGDTYRGSYDSSIEEVRSYYASVSGYHDELLWAALWLHRATGKEEYLRYAVDNADSFGGVGWAITEFSWDVKYAGLQVLAAKLLLDGDPQAAAHRGVLEKYREKAEHYLCACLGRNINGADNVDRSPGGMLYVRQWNNLQYASSAAFLLTAYSHYLSSSSASASAALRCPGGAAAAAEMVSLARSQADYILGRNPLRLSYMVGYGRRYPARVHHRGASIVSHKEDGRFIGCVQGFDDWFGRGRANPNVLAGAIVGGPSRRDEFRDDRANYMQTEACTYNTAPMVAVFARLHRLTTAITTAAAAEDPDGGSPDRRSVDRR.

The signal sequence occupies residues 1–33 (MSRGRARLQPPPPGTRTTTLAAVLVLVLLAVVA). The active-site Nucleophile is Asp108. Residues His450, Asp502, and Glu511 contribute to the active site.

Belongs to the glycosyl hydrolase 9 (cellulase E) family.

It is found in the secreted. It catalyses the reaction Endohydrolysis of (1-&gt;4)-beta-D-glucosidic linkages in cellulose, lichenin and cereal beta-D-glucans.. The sequence is that of Endoglucanase 22 (GLU11) from Oryza sativa subsp. japonica (Rice).